Consider the following 491-residue polypeptide: Probable glycine dehydrogenase (decarboxylating) subunit 2 (491 aa).

An N6-(pyridoxal phosphate)lysine modification is found at lysine 273.

It belongs to the GcvP family. C-terminal subunit subfamily. In terms of assembly, the glycine cleavage system is composed of four proteins: P, T, L and H. In this organism, the P 'protein' is a heterodimer of two subunits. Requires pyridoxal 5'-phosphate as cofactor.

It catalyses the reaction N(6)-[(R)-lipoyl]-L-lysyl-[glycine-cleavage complex H protein] + glycine + H(+) = N(6)-[(R)-S(8)-aminomethyldihydrolipoyl]-L-lysyl-[glycine-cleavage complex H protein] + CO2. Functionally, the glycine cleavage system catalyzes the degradation of glycine. The P protein binds the alpha-amino group of glycine through its pyridoxal phosphate cofactor; CO(2) is released and the remaining methylamine moiety is then transferred to the lipoamide cofactor of the H protein. The polypeptide is Probable glycine dehydrogenase (decarboxylating) subunit 2 (Bacillus anthracis (strain A0248)).